Reading from the N-terminus, the 209-residue chain is NDR1/HIN1-like protein 1 (209 aa).

Residues 18–38 (IFWSIIFVLFIIFLTILLIWA) traverse the membrane as a helical segment. An N-linked (GlcNAc...) asparagine glycan is attached at asparagine 58.

Expressed in rosette leaves, cauline leaves, stems, and siliques, and at lower levels in roots and flowers.

The protein resides in the cell membrane. Its function is as follows. May play a role in plant immunity. In Arabidopsis thaliana (Mouse-ear cress), this protein is NDR1/HIN1-like protein 1.